A 316-amino-acid chain; its full sequence is Dof zinc finger protein DOF5.7 (316 aa).

Positions 1 to 42 (MSSHTNLPSPKPVPKPDHRISGTSQTKKPPSSSVAQDQQNLK) are disordered. Positions 21-42 (SGTSQTKKPPSSSVAQDQQNLK) are enriched in polar residues. The Dof-type zinc-finger motif lies at 41-95 (LKCPRCNSPNTKFCYYNNYSLSQPRHFCKSCRRYWTRGGALRNVPIGGGCRKTKK). Zn(2+) is bound by residues C43, C46, C68, and C71. 2 disordered regions span residues 92-111 (KTKKSIKPNSSMNTLPSSSS) and 257-294 (NSSSPSSPTKKGDNQTEWYFGNNSDNEGVISNNANTGG). A compositionally biased stretch (low complexity) spans 101 to 111 (SSMNTLPSSSS). Residues 257-291 (NSSSPSSPTKKGDNQTEWYFGNNSDNEGVISNNAN) show a composition bias toward polar residues.

It localises to the nucleus. Transcription factor that binds specifically to a 5'-AA[AG]G-3' consensus core sequence. The chain is Dof zinc finger protein DOF5.7 (DOF5.7) from Arabidopsis thaliana (Mouse-ear cress).